An 824-amino-acid chain; its full sequence is Ent-copalyl diphosphate synthase AN1, chloroplastic (824 aa).

The N-terminal 63 residues, 1–63 (MPYPHPYPWQ…SSAKVFQTSR (63 aa)), are a transit peptide targeting the chloroplast. Positions 1–87 (MPYPHPYPWQ…QDLEDEHQAE (87 aa)) are disordered. The span at 44–63 (ATTTQQPDNVSSAKVFQTSR) shows a compositional bias: polar residues. Lys247 is a binding site for substrate. Positions 379 and 381 each coordinate Mg(2+). Residues 379–382 (DVDD) carry the DXDD motif motif. Lys465 contributes to the substrate binding site.

Belongs to the terpene synthase family. Tpsc subfamily. Requires Mg(2+) as cofactor.

The protein resides in the plastid. It localises to the chloroplast. The enzyme catalyses (2E,6E,10E)-geranylgeranyl diphosphate = ent-copalyl diphosphate. It functions in the pathway plant hormone biosynthesis; gibberellin biosynthesis. Its function is as follows. Involved in giberellin biosynthesis. Catalyzes the conversion of geranylgeranyl diphosphate to the gibberellin precursor ent-copalyl diphosphate. The sequence is that of Ent-copalyl diphosphate synthase AN1, chloroplastic from Zea mays (Maize).